The chain runs to 159 residues: Ribonuclease H (159 aa).

Positions 2-144 (SQDPVIIHTD…ADELATRGLQ (143 aa)) constitute an RNase H type-1 domain. Mg(2+)-binding residues include Asp-11, Glu-50, Asp-72, and Asp-136.

It belongs to the RNase H family. As to quaternary structure, monomer. Mg(2+) serves as cofactor.

The protein resides in the cytoplasm. It catalyses the reaction Endonucleolytic cleavage to 5'-phosphomonoester.. Endonuclease that specifically degrades the RNA of RNA-DNA hybrids. This Mycolicibacterium smegmatis (strain ATCC 700084 / mc(2)155) (Mycobacterium smegmatis) protein is Ribonuclease H.